The following is a 765-amino-acid chain: Phosphoribosylformylglycinamidine synthase subunit PurL (765 aa).

The segment covering 1–13 has biased composition (polar residues); it reads MTVSPTSAPTQAI. The disordered stretch occupies residues 1–32; the sequence is MTVSPTSAPTQAIDTVERAATTPDEPQPFGEL. His-65 is an active-site residue. ATP contacts are provided by Tyr-68 and Lys-112. Mg(2+) is bound at residue Glu-114. Residues 115–118 and Arg-137 contribute to the substrate site; that span reads SHNH. The active-site Proton acceptor is the His-116. Asp-138 provides a ligand contact to Mg(2+). Gln-263 provides a ligand contact to substrate. Residue Asp-291 participates in Mg(2+) binding. 335-337 serves as a coordination point for substrate; it reads ESQ. Asn-523 and Gly-560 together coordinate ATP. Asn-561 provides a ligand contact to Mg(2+). Ser-563 contacts substrate.

This sequence belongs to the FGAMS family. As to quaternary structure, monomer. Part of the FGAM synthase complex composed of 1 PurL, 1 PurQ and 2 PurS subunits.

It localises to the cytoplasm. The enzyme catalyses N(2)-formyl-N(1)-(5-phospho-beta-D-ribosyl)glycinamide + L-glutamine + ATP + H2O = 2-formamido-N(1)-(5-O-phospho-beta-D-ribosyl)acetamidine + L-glutamate + ADP + phosphate + H(+). Its pathway is purine metabolism; IMP biosynthesis via de novo pathway; 5-amino-1-(5-phospho-D-ribosyl)imidazole from N(2)-formyl-N(1)-(5-phospho-D-ribosyl)glycinamide: step 1/2. In terms of biological role, part of the phosphoribosylformylglycinamidine synthase complex involved in the purines biosynthetic pathway. Catalyzes the ATP-dependent conversion of formylglycinamide ribonucleotide (FGAR) and glutamine to yield formylglycinamidine ribonucleotide (FGAM) and glutamate. The FGAM synthase complex is composed of three subunits. PurQ produces an ammonia molecule by converting glutamine to glutamate. PurL transfers the ammonia molecule to FGAR to form FGAM in an ATP-dependent manner. PurS interacts with PurQ and PurL and is thought to assist in the transfer of the ammonia molecule from PurQ to PurL. This chain is Phosphoribosylformylglycinamidine synthase subunit PurL, found in Mycobacterium avium (strain 104).